Consider the following 226-residue polypeptide: PKHD-type hydroxylase Sde_2812 (226 aa).

The 101-residue stretch at 78–178 folds into the Fe2OG dioxygenase domain; sequence KIFPPLFNCY…RLASFFWLQS (101 aa). Fe cation contacts are provided by His96, Asp98, and His159. Position 169 (Arg169) interacts with 2-oxoglutarate.

Fe(2+) is required as a cofactor. Requires L-ascorbate as cofactor.

This Saccharophagus degradans (strain 2-40 / ATCC 43961 / DSM 17024) protein is PKHD-type hydroxylase Sde_2812.